A 249-amino-acid polypeptide reads, in one-letter code: ATP synthase subunit a, chloroplastic (249 aa).

5 helical membrane-spanning segments follow: residues 40–60 (QVLI…VLAI), 97–117 (VPFI…GALL), 136–156 (INTT…AGLS), 201–221 (LVVV…VMFL), and 222–242 (GLFT…AYIG).

Belongs to the ATPase A chain family. F-type ATPases have 2 components, CF(1) - the catalytic core - and CF(0) - the membrane proton channel. CF(1) has five subunits: alpha(3), beta(3), gamma(1), delta(1), epsilon(1). CF(0) has four main subunits: a, b, b' and c.

It is found in the plastid. The protein localises to the chloroplast thylakoid membrane. Key component of the proton channel; it plays a direct role in the translocation of protons across the membrane. This is ATP synthase subunit a, chloroplastic from Capsella bursa-pastoris (Shepherd's purse).